Here is a 625-residue protein sequence, read N- to C-terminus: Probable potassium transport system protein Kup (625 aa).

Helical transmembrane passes span 10–30 (LAAL…TSPL), 50–70 (LLGV…LKYV), 102–122 (YFPL…DSVI), 135–155 (LGVA…AILV), 172–192 (FGPV…VNII), 214–234 (GFLA…AEAL), 251–271 (FLIA…LLLL), 284–304 (LGAW…IIAS), 340–360 (IYIP…VIGF), 369–389 (AYGI…FFVI), 397–417 (LILC…LFSA), and 422–442 (LFHG…LMLT).

This sequence belongs to the HAK/KUP transporter (TC 2.A.72) family.

The protein localises to the cell inner membrane. The enzyme catalyses K(+)(in) + H(+)(in) = K(+)(out) + H(+)(out). Transport of potassium into the cell. Likely operates as a K(+):H(+) symporter. The sequence is that of Probable potassium transport system protein Kup from Herminiimonas arsenicoxydans.